The sequence spans 293 residues: Histone H3-like centromeric protein CSE4 (293 aa).

Residues 132 to 141 (QDLSYDESDY) are compositionally biased toward acidic residues. The disordered stretch occupies residues 132–169 (QDLSYDESDYSDPLQEIDSNYRESPRRTTDKILKSSSK). The span at 150–164 (SNYRESPRRTTDKIL) shows a compositional bias: basic and acidic residues. The interval 157–291 (RRTTDKILKS…VQLARRIRGQ (135 aa)) is H3-like.

This sequence belongs to the histone H3 family. In terms of assembly, component of centromeric nucleosomes, where DNA is wrapped around a histone octamer core. The octamer contains two molecules each of H2A, H2B, CSE4/CENPA and H4 assembled in one CSE4-H4 heterotetramer and two H2A-H2B heterodimers. Interacts with the inner kinetochore. Post-translationally, ubiquitinated. Is degraded through ubiquitin-mediated proteolysis when not protected by its association to the kinetochore.

The protein localises to the nucleus. It is found in the chromosome. Its subcellular location is the centromere. Histone H3-like nucleosomal protein that is specifically found in centromeric nucleosomes. Replaces conventional H3 in the nucleosome core of centromeric chromatin that serves as an assembly site for the inner kinetochore. Required for recruitment and assembly of kinetochore proteins, mitotic progression and chromosome segregation. May serve as an epigenetic mark that propagates centromere identity through replication and cell division. This Monosporozyma servazzii (Yeast) protein is Histone H3-like centromeric protein CSE4 (CSE4).